The sequence spans 105 residues: Nucleoid-associated protein Lm4b_02677 (105 aa).

Residues 1 to 16 (MRGMGNMQGMMKQMQK) are compositionally biased toward low complexity. The tract at residues 1–23 (MRGMGNMQGMMKQMQKMQKEMAK) is disordered.

Belongs to the YbaB/EbfC family. Homodimer.

The protein localises to the cytoplasm. The protein resides in the nucleoid. In terms of biological role, binds to DNA and alters its conformation. May be involved in regulation of gene expression, nucleoid organization and DNA protection. This Listeria monocytogenes serotype 4b (strain CLIP80459) protein is Nucleoid-associated protein Lm4b_02677.